The primary structure comprises 499 residues: Bifunctional purine biosynthesis protein PurH (499 aa).

An MGS-like domain is found at 1 to 144 (MIKRALISVF…KNFKDVVVLT (144 aa)).

Belongs to the PurH family.

The enzyme catalyses (6R)-10-formyltetrahydrofolate + 5-amino-1-(5-phospho-beta-D-ribosyl)imidazole-4-carboxamide = 5-formamido-1-(5-phospho-D-ribosyl)imidazole-4-carboxamide + (6S)-5,6,7,8-tetrahydrofolate. It catalyses the reaction IMP + H2O = 5-formamido-1-(5-phospho-D-ribosyl)imidazole-4-carboxamide. It participates in purine metabolism; IMP biosynthesis via de novo pathway; 5-formamido-1-(5-phospho-D-ribosyl)imidazole-4-carboxamide from 5-amino-1-(5-phospho-D-ribosyl)imidazole-4-carboxamide (10-formyl THF route): step 1/1. It functions in the pathway purine metabolism; IMP biosynthesis via de novo pathway; IMP from 5-formamido-1-(5-phospho-D-ribosyl)imidazole-4-carboxamide: step 1/1. The sequence is that of Bifunctional purine biosynthesis protein PurH from Clostridium botulinum (strain 657 / Type Ba4).